Reading from the N-terminus, the 146-residue chain is 3-hydroxyacyl-[acyl-carrier-protein] dehydratase FabZ (146 aa).

His-46 is an active-site residue.

This sequence belongs to the thioester dehydratase family. FabZ subfamily.

The protein localises to the cytoplasm. The catalysed reaction is a (3R)-hydroxyacyl-[ACP] = a (2E)-enoyl-[ACP] + H2O. Its function is as follows. Involved in unsaturated fatty acids biosynthesis. Catalyzes the dehydration of short chain beta-hydroxyacyl-ACPs and long chain saturated and unsaturated beta-hydroxyacyl-ACPs. This is 3-hydroxyacyl-[acyl-carrier-protein] dehydratase FabZ from Acinetobacter baumannii (strain ATCC 17978 / DSM 105126 / CIP 53.77 / LMG 1025 / NCDC KC755 / 5377).